The chain runs to 271 residues: Non-homologous end joining protein Ku (271 aa).

One can recognise a Ku domain in the interval 12–194; the sequence is KLSLVTCPVV…DQKPVPELLS (183 aa). The disordered stretch occupies residues 225-249; the sequence is EAKKTPPAKKTKAEEKTGKGSAESN.

Belongs to the prokaryotic Ku family. Homodimer. Interacts with LigD.

Its function is as follows. With LigD forms a non-homologous end joining (NHEJ) DNA repair enzyme, which repairs dsDNA breaks with reduced fidelity. Binds linear dsDNA with 5'- and 3'- overhangs but not closed circular dsDNA nor ssDNA. Recruits and stimulates the ligase activity of LigD. The chain is Non-homologous end joining protein Ku from Methylocella silvestris (strain DSM 15510 / CIP 108128 / LMG 27833 / NCIMB 13906 / BL2).